Reading from the N-terminus, the 150-residue chain is Actin-related protein 2/3 complex subunit 5-C (150 aa).

The segment at Asn21–Ile45 is disordered.

It belongs to the ARPC5 family. As to quaternary structure, component of the Arp2/3 complex composed of actr2/arp2, actr3/arp3, arpc1 (arpc1a or arpc1b), arpc2, arpc3, arpc4 and arpc5.

It localises to the cytoplasm. The protein resides in the cytoskeleton. It is found in the cell projection. The protein localises to the nucleus. Component of the Arp2/3 complex, a multiprotein complex that mediates actin polymerization upon stimulation by nucleation-promoting factor (NPF). The Arp2/3 complex mediates the formation of branched actin networks in the cytoplasm, providing the force for cell motility. In addition to its role in the cytoplasmic cytoskeleton, the Arp2/3 complex also promotes actin polymerization in the nucleus, thereby regulating gene transcription and repair of damaged DNA. The Arp2/3 complex promotes homologous recombination (HR) repair in response to DNA damage by promoting nuclear actin polymerization, leading to drive motility of double-strand breaks (DSBs). The sequence is that of Actin-related protein 2/3 complex subunit 5-C (arpc5-c) from Xenopus laevis (African clawed frog).